The chain runs to 240 residues: UDP-2,3-diacylglucosamine hydrolase (240 aa).

Asp-8, His-10, Asp-41, Asn-79, and His-114 together coordinate Mn(2+). Asn-79–Arg-80 contributes to the substrate binding site. Residues Asp-122, Ser-160, Asn-164, Lys-167, and His-195 each contribute to the substrate site. Mn(2+) is bound by residues His-195 and His-197.

It belongs to the LpxH family. Requires Mn(2+) as cofactor.

Its subcellular location is the cell inner membrane. The catalysed reaction is UDP-2-N,3-O-bis[(3R)-3-hydroxytetradecanoyl]-alpha-D-glucosamine + H2O = 2-N,3-O-bis[(3R)-3-hydroxytetradecanoyl]-alpha-D-glucosaminyl 1-phosphate + UMP + 2 H(+). It functions in the pathway glycolipid biosynthesis; lipid IV(A) biosynthesis; lipid IV(A) from (3R)-3-hydroxytetradecanoyl-[acyl-carrier-protein] and UDP-N-acetyl-alpha-D-glucosamine: step 4/6. Hydrolyzes the pyrophosphate bond of UDP-2,3-diacylglucosamine to yield 2,3-diacylglucosamine 1-phosphate (lipid X) and UMP by catalyzing the attack of water at the alpha-P atom. Involved in the biosynthesis of lipid A, a phosphorylated glycolipid that anchors the lipopolysaccharide to the outer membrane of the cell. The polypeptide is UDP-2,3-diacylglucosamine hydrolase (Escherichia coli O81 (strain ED1a)).